The following is a 93-amino-acid chain: Small ribosomal subunit protein uS19 (93 aa).

It belongs to the universal ribosomal protein uS19 family.

Protein S19 forms a complex with S13 that binds strongly to the 16S ribosomal RNA. This Mycobacterium leprae (strain TN) protein is Small ribosomal subunit protein uS19 (rpsS).